The chain runs to 510 residues: Facilitated glucose transporter protein 1 (510 aa).

The disordered stretch occupies residues Met-1–Gly-29. The Cytoplasmic segment spans residues Met-1–Leu-46. Residues Asp-8–Gly-29 are compositionally biased toward low complexity. Residues Ala-47 to Val-67 form a helical membrane-spanning segment. Residues Asn-68–Ser-100 lie on the Extracellular side of the membrane. The helical transmembrane segment at Val-101–Ala-121 threads the bilayer. At Asp-122–Arg-127 the chain is on the cytoplasmic side. Residues Gly-128–Leu-146 form a helical membrane-spanning segment. Topologically, residues Ala-147–Arg-160 are extracellular. A helical transmembrane segment spans residues Leu-161 to Ile-181. At Ser-182 to Gln-195 the chain is on the cytoplasmic side. Gln-195 contributes to the D-glucose binding site. The chain crosses the membrane as a helical span at residues Leu-196–Thr-216. At Gly-217–Arg-219 the chain is on the extracellular side. Residues Trp-220–Leu-240 form a helical membrane-spanning segment. At Cys-241–Gly-299 the chain is on the cytoplasmic side. Residues Ala-300–Ile-320 form a helical membrane-spanning segment. D-glucose is bound by residues Gln-315–Gln-316, Asn-321, and Asn-352. The Extracellular portion of the chain corresponds to Asn-321–Pro-341. Residues Phe-342–Leu-362 traverse the membrane as a helical segment. Topologically, residues Val-363–Leu-373 are cytoplasmic. Residues Leu-374 to Ile-394 traverse the membrane as a helical segment. The Extracellular portion of the chain corresponds to Gln-395–Gly-409. A helical membrane pass occupies residues Phe-410–Val-430. D-glucose is bound at residue Trp-427. The Cytoplasmic portion of the chain corresponds to Ser-431–Ile-445. Residues Ala-446–Ile-464 traverse the membrane as a helical segment. The Extracellular portion of the chain corresponds to Asn-465–Gln-470. The chain crosses the membrane as a helical span at residues Tyr-471–Val-491. Residues Pro-492–Lys-510 are Cytoplasmic-facing.

This sequence belongs to the major facilitator superfamily. Sugar transporter (TC 2.A.1.1) family. Glucose transporter subfamily. In terms of tissue distribution, isoform a is expressed in pharyngeal muscle and intestinal cells in both embryos and adults (at protein level).

It localises to the cell membrane. Its subcellular location is the basolateral cell membrane. In terms of biological role, facilitative glucose transporter that plays a role in glucose metabolism and regulation of longevity. May also play a role in lipid metabolism. Glucose transport activity of isoform a is competitively inhibited by mannose, galactose and fructose, suggesting ability to transport also other hexose sugars. This chain is Facilitated glucose transporter protein 1, found in Caenorhabditis elegans.